A 450-amino-acid chain; its full sequence is Tubulin alpha chain (450 aa).

Residues 1 to 4 (MREC) carry the MREC motif motif. Residue Q11 participates in GTP binding. At K40 the chain carries N6-acetyllysine. Positions 71, 140, 144, 145, 179, 206, and 228 each coordinate GTP. Residue E71 coordinates Mg(2+). E254 is a catalytic residue. E444 is modified (5-glutamyl polyglutamate).

This sequence belongs to the tubulin family. As to quaternary structure, dimer of alpha and beta chains. A typical microtubule is a hollow water-filled tube with an outer diameter of 25 nm and an inner diameter of 15 nM. Alpha-beta heterodimers associate head-to-tail to form protofilaments running lengthwise along the microtubule wall with the beta-tubulin subunit facing the microtubule plus end conferring a structural polarity. Microtubules usually have 13 protofilaments but different protofilament numbers can be found in some organisms and specialized cells. Mg(2+) is required as a cofactor. Some glutamate residues at the C-terminus are polyglycylated, resulting in polyglycine chains on the gamma-carboxyl group. Glycylation is mainly limited to tubulin incorporated into axonemes (cilia and flagella) whereas glutamylation is prevalent in neuronal cells, centrioles, axonemes, and the mitotic spindle. Both modifications can coexist on the same protein on adjacent residues, and lowering polyglycylation levels increases polyglutamylation, and reciprocally. The precise function of polyglycylation is still unclear. Post-translationally, some glutamate residues at the C-terminus are polyglutamylated, resulting in polyglutamate chains on the gamma-carboxyl group. Polyglutamylation plays a key role in microtubule severing by spastin (SPAST). SPAST preferentially recognizes and acts on microtubules decorated with short polyglutamate tails: severing activity by SPAST increases as the number of glutamates per tubulin rises from one to eight, but decreases beyond this glutamylation threshold. In terms of processing, acetylation of alpha chains at Lys-40 is located inside the microtubule lumen. This modification has been correlated with increased microtubule stability, intracellular transport and ciliary assembly. Undergoes a tyrosination/detyrosination cycle, the cyclic removal and re-addition of a C-terminal tyrosine residue by the enzymes tubulin tyrosine carboxypeptidase (MATCAP, VASH1 or VASH2) and tubulin tyrosine ligase (TTL), respectively. Post-translationally, tyrosination promotes microtubule interaction with CAP-Gly microtubule plus-end tracking proteins. Tyrosinated tubulins regulate the initiation of dynein-driven motility. In terms of processing, detyrosination is involved in metaphase plate congression by guiding chromosomes during mitosis. Detyrosination increases microtubules-dependent mechanotransduction in dystrophic cardiac and skeletal muscle. In cardiomyocytes, detyrosinated microtubules are required to resist to contractile compression during contraction.

The protein localises to the cytoplasm. The protein resides in the cytoskeleton. It carries out the reaction GTP + H2O = GDP + phosphate + H(+). Its function is as follows. Tubulin is the major constituent of microtubules, a cylinder consisting of laterally associated linear protofilaments composed of alpha- and beta-tubulin heterodimers. Microtubules grow by the addition of GTP-tubulin dimers to the microtubule end, where a stabilizing cap forms. Below the cap, tubulin dimers are in GDP-bound state, owing to GTPase activity of alpha-tubulin. The chain is Tubulin alpha chain from Notophthalmus viridescens (Eastern newt).